We begin with the raw amino-acid sequence, 129 residues long: Phosphoribosyl-AMP cyclohydrolase (129 aa).

Mg(2+) is bound at residue D85. C86 serves as a coordination point for Zn(2+). Residues D87 and D89 each coordinate Mg(2+). Zn(2+) contacts are provided by C102 and C109.

Belongs to the PRA-CH family. Homodimer. Mg(2+) is required as a cofactor. The cofactor is Zn(2+).

It localises to the cytoplasm. The enzyme catalyses 1-(5-phospho-beta-D-ribosyl)-5'-AMP + H2O = 1-(5-phospho-beta-D-ribosyl)-5-[(5-phospho-beta-D-ribosylamino)methylideneamino]imidazole-4-carboxamide. Its pathway is amino-acid biosynthesis; L-histidine biosynthesis; L-histidine from 5-phospho-alpha-D-ribose 1-diphosphate: step 3/9. Its function is as follows. Catalyzes the hydrolysis of the adenine ring of phosphoribosyl-AMP. This Methanococcus maripaludis (strain C7 / ATCC BAA-1331) protein is Phosphoribosyl-AMP cyclohydrolase.